A 179-amino-acid polypeptide reads, in one-letter code: Dual-action ribosomal maturation protein DarP (179 aa).

The protein belongs to the DarP family.

It is found in the cytoplasm. Functionally, member of a network of 50S ribosomal subunit biogenesis factors which assembles along the 30S-50S interface, preventing incorrect 23S rRNA structures from forming. Promotes peptidyl transferase center (PTC) maturation. This is Dual-action ribosomal maturation protein DarP from Photorhabdus laumondii subsp. laumondii (strain DSM 15139 / CIP 105565 / TT01) (Photorhabdus luminescens subsp. laumondii).